The sequence spans 330 residues: PTS system mannose-specific EIIAB component (330 aa).

Residues 2–130 (GIGIIIASHG…NIIKESKDGI (129 aa)) enclose the PTS EIIA type-4 domain. The Tele-phosphohistidine intermediate; for EIIA activity role is filled by His10. Phosphohistidine; by HPr is present on His10. A hinge region spans residues 143 to 161 (TAATEKVVNALQGAIPAGT). The PTS EIIB type-4 domain occupies 166–330 (GKLKINLARV…FELIQKANIK (165 aa)). His181 (pros-phosphohistidine intermediate; for EIIB activity) is an active-site residue. His181 bears the Phosphohistidine; by EIIA mark.

Homodimer.

The protein resides in the cytoplasm. It localises to the cell membrane. The catalysed reaction is D-mannose(out) + N(pros)-phospho-L-histidyl-[protein] = D-mannose 6-phosphate(in) + L-histidyl-[protein]. Its function is as follows. The phosphoenolpyruvate-dependent sugar phosphotransferase system (sugar PTS), a major carbohydrate active transport system, catalyzes the phosphorylation of incoming sugar substrates concomitantly with their translocation across the cell membrane. The enzyme II ManXYZ PTS system is involved in mannose transport. The sequence is that of PTS system mannose-specific EIIAB component from Streptococcus pyogenes serotype M6 (strain ATCC BAA-946 / MGAS10394).